A 64-amino-acid chain; its full sequence is Large ribosomal subunit protein bL28 (64 aa).

Belongs to the bacterial ribosomal protein bL28 family.

The polypeptide is Large ribosomal subunit protein bL28 (Campylobacter jejuni subsp. doylei (strain ATCC BAA-1458 / RM4099 / 269.97)).